The chain runs to 328 residues: Sin3 histone deacetylase corepressor complex component SDS3 (328 aa).

The segment covering 1–16 (MSAAGLLAPAPAQAGA) has biased composition (low complexity). Residues 1 to 65 (MSAAGLLAPA…DLAKHDEEDY (65 aa)) form a disordered region. N-acetylserine is present on Ser2. The mediates interaction with USP17L2 stretch occupies residues 2–170 (SAAGLLAPAP…IENEKLTMEL (169 aa)). Acidic residues-rich tracts occupy residues 23–37 (YPEE…EEDE) and 45–54 (SDEDTEDASE). Ser32 and Ser45 each carry phosphoserine. Phosphothreonine is present on Thr49. Residue Ser53 is modified to Phosphoserine. Over residues 56–65 (DLAKHDEEDY) the composition is skewed to basic and acidic residues. Positions 66–171 (VEMKEQMYQD…ENEKLTMELT (106 aa)) form a coiled coil. Glycyl lysine isopeptide (Lys-Gly) (interchain with G-Cter in SUMO2) cross-links involve residues Lys69, Lys178, and Lys201. The sin3 interaction domain (SID) stretch occupies residues 188–226 (RPNDPVPIPDKRRKPAPAQLNYLLTDEQIMEDLRTLNKL). The interval 226–252 (LKSPKRPASPSSPEHLPATPAESPAQR) is disordered. A phosphoserine mark is found at Ser228, Ser234, and Ser237. Position 244 is a phosphothreonine (Thr244).

It belongs to the SDS3 family. In terms of assembly, interacts with HCFC1. Homodimer. Component of the SIN3 histone deacetylase (HDAC) corepressor complex. Interacts with SIN3A. Interaction with SIN3B enhances the interaction between SIN3B and HDAC1 to form a complex. Component of a mSin3A corepressor complex that contains SIN3A, SAP130, SUDS3/SAP45, ARID4B/SAP180, HDAC1 and HDAC2. Interacts with USP17L2; the interaction is direct. Interacts with FOXK2. Polyubiquitinated. 'Lys-63'-polyubiquitinated SUDS3 positively regulates histone deacetylation. Regulated through deubiquitination by USP17L2/USP17 that cleaves 'Lys-63'-linked ubiquitin chains.

The protein localises to the nucleus. Functionally, regulatory protein which represses transcription and augments histone deacetylase activity of HDAC1. May have a potential role in tumor suppressor pathways through regulation of apoptosis. May function in the assembly and/or enzymatic activity of the mSin3A corepressor complex or in mediating interactions between the complex and other regulatory complexes. In Pongo abelii (Sumatran orangutan), this protein is Sin3 histone deacetylase corepressor complex component SDS3 (SUDS3).